Consider the following 653-residue polypeptide: Testicular spindle-associated protein SHCBP1L (653 aa).

Residues 1 to 65 (MASGSKASVP…PVKGKAGRET (65 aa)) are disordered. Ser-8 is subject to Phosphoserine. Positions 28–41 (SAVSGDTAAATTLK) are enriched in polar residues. The segment covering 46 to 56 (PVRSVVASPRP) has biased composition (low complexity). Ser-53 bears the Phosphoserine mark. The stretch at 299 to 326 (IAQRFKKTLEKYKNKRVELIEYQSNIKE) forms a coiled coil. 4 PbH1 repeats span residues 493–514 (SGHMTLENCILKCEGTGVCVLT), 515–537 (GAALTITDSEITGAQGAGVELYP), 538–571 (GSIAILERNEIHHCNNLRTSNSSKSTLGGVNMKV), and 574–596 (APKLKMTNNHIYSNKGYGVSILQ). An N6-acetyllysine modification is found at Lys-570. An N6-acetyllysine modification is found at Lys-645.

In terms of assembly, interacts with HSPA2; this interaction may promote the recruitment of HSPA2 to the spindle. As to expression, expressed in spermatocytes and elongating spermatids inside the seminiferous tubules (at protein level). Testis-specific.

The protein localises to the cytoplasm. Its subcellular location is the cytoskeleton. The protein resides in the spindle. In terms of biological role, testis-specific spindle-associated factor that plays a role in spermatogenesis. In association with HSPA2, participates in the maintenance of spindle integrity during meiosis in male germ cells. This is Testicular spindle-associated protein SHCBP1L from Homo sapiens (Human).